Consider the following 271-residue polypeptide: tRNA (guanine-N(7)-)-methyltransferase (271 aa).

The segment at 1-52 (MSDSHHTPEAASASLRHVRAKGEPRFPDGPKADPAGSHFERRIRSFQPRRSR) is disordered. The segment covering 20-31 (AKGEPRFPDGPK) has biased composition (basic and acidic residues). The S-adenosyl-L-methionine site is built by glutamate 93, aspartate 118, aspartate 145, and aspartate 168. The active site involves aspartate 168. Substrate is bound by residues lysine 172, aspartate 204, and 241–244 (TRFE).

This sequence belongs to the class I-like SAM-binding methyltransferase superfamily. TrmB family.

The catalysed reaction is guanosine(46) in tRNA + S-adenosyl-L-methionine = N(7)-methylguanosine(46) in tRNA + S-adenosyl-L-homocysteine. The protein operates within tRNA modification; N(7)-methylguanine-tRNA biosynthesis. Its function is as follows. Catalyzes the formation of N(7)-methylguanine at position 46 (m7G46) in tRNA. This Streptomyces coelicolor (strain ATCC BAA-471 / A3(2) / M145) protein is tRNA (guanine-N(7)-)-methyltransferase.